The sequence spans 111 residues: Notch-regulated ankyrin repeat-containing protein B (111 aa).

2 ANK repeats span residues 47–76 (EGQT…DTRL) and 80–109 (DGWS…YSSS).

This sequence belongs to the NRARP family.

In terms of biological role, regulates independently canonical Wnt and Notch signaling by modulating LEF1 and Notch protein turnover. Stabilizes LEF1, a pivotal transcription factor in the Wnt signaling cascade, by blocking its ubiquitination. Involved in angiogenesis; involved in intersegmental vessel patterning during development. The polypeptide is Notch-regulated ankyrin repeat-containing protein B (nrarpb) (Danio rerio (Zebrafish)).